Reading from the N-terminus, the 147-residue chain is Large ribosomal subunit protein uL13 (147 aa).

Belongs to the universal ribosomal protein uL13 family. As to quaternary structure, part of the 50S ribosomal subunit.

Functionally, this protein is one of the early assembly proteins of the 50S ribosomal subunit, although it is not seen to bind rRNA by itself. It is important during the early stages of 50S assembly. This is Large ribosomal subunit protein uL13 from Mycobacterium marinum (strain ATCC BAA-535 / M).